We begin with the raw amino-acid sequence, 356 residues long: tRNA-splicing endonuclease subunit SEN2 (356 aa).

Catalysis depends on residues Tyr268, His276, and Lys307.

The protein belongs to the tRNA-intron endonuclease family. In terms of assembly, heterotetramer composed of SEN2, SEN15, SEN34 and SEN54. Interacts directly with SEN54.

The enzyme catalyses pretRNA = a 3'-half-tRNA molecule with a 5'-OH end + a 5'-half-tRNA molecule with a 2',3'-cyclic phosphate end + an intron with a 2',3'-cyclic phosphate and a 5'-hydroxyl terminus.. Functionally, constitutes one of the two catalytic subunit of the tRNA-splicing endonuclease complex, a complex responsible for identification and cleavage of the splice sites in pre-tRNA. It cleaves pre-tRNA at the 5'- and 3'-splice sites to release the intron. The products are an intron and two tRNA half-molecules bearing 2',3'-cyclic phosphate and 5'-OH termini. There are no conserved sequences at the splice sites, but the intron is invariably located at the same site in the gene, placing the splice sites an invariant distance from the constant structural features of the tRNA body. This subunit may anchor the endonuclease complex to the nuclear membrane. Probably carries the active site for 5'-splice site cleavage. The polypeptide is tRNA-splicing endonuclease subunit SEN2 (SEN2) (Eremothecium gossypii (strain ATCC 10895 / CBS 109.51 / FGSC 9923 / NRRL Y-1056) (Yeast)).